Here is a 398-residue protein sequence, read N- to C-terminus: Aldo-keto reductase ausK (398 aa).

An NADP(+)-binding site is contributed by aspartate 76. The active-site Proton donor is tyrosine 81. Histidine 156 contacts substrate. NADP(+) contacts are provided by residues 186–187 (CN), glutamine 212, 241–251 (DALGSGKFQSR), and 317–325 (RKIQHLHDN).

It belongs to the aldo/keto reductase family. Aldo/keto reductase 2 subfamily. Homodimer.

Its pathway is secondary metabolite biosynthesis; terpenoid biosynthesis. In terms of biological role, aldo-keto reductase; part of the gene cluster B that mediates the biosynthesis of austinol and dehydroaustinol, two fungal meroterpenoids. The first step of the pathway is the synthesis of 3,5-dimethylorsellinic acid by the polyketide synthase ausA. 3,5-dimethylorsellinic acid is then prenylated by the polyprenyl transferase ausN. Further epoxidation by the FAD-dependent monooxygenase ausM and cyclization by the probable terpene cyclase ausL lead to the formation of protoaustinoid A. Protoaustinoid A is then oxidized to spiro-lactone preaustinoid A3 by the combined action of the FAD-binding monooxygenases ausB and ausC, and the dioxygenase ausE. Acid-catalyzed keto-rearrangement and ring contraction of the tetraketide portion of preaustinoid A3 by ausJ lead to the formation of preaustinoid A4. The aldo-keto reductase ausK, with the help of ausH, is involved in the next step by transforming preaustinoid A4 into isoaustinone which is in turn hydroxylated by the P450 monooxygenase ausI to form austinolide. Finally, the cytochrome P450 monooxygenase ausG modifies austinolide to austinol. Austinol can be further modified to dehydroaustinol which forms a diffusible complex with diorcinol that initiates conidiation. Due to genetic rearrangements of the clusters and the subsequent loss of some enzymes, the end products of the Emericella nidulans austinoid biosynthesis clusters are austinol and dehydroaustinol, even if additional enzymes, such as the O-acetyltransferase ausQ and the cytochrome P450 monooxygenase ausR are still functional. This is Aldo-keto reductase ausK from Emericella nidulans (strain FGSC A4 / ATCC 38163 / CBS 112.46 / NRRL 194 / M139) (Aspergillus nidulans).